We begin with the raw amino-acid sequence, 514 residues long: Bifunctional purine biosynthesis protein PurH (514 aa).

Positions 1-145 (MIKRALISVS…KNYQDVAVIV (145 aa)) constitute an MGS-like domain.

The protein belongs to the PurH family.

The catalysed reaction is (6R)-10-formyltetrahydrofolate + 5-amino-1-(5-phospho-beta-D-ribosyl)imidazole-4-carboxamide = 5-formamido-1-(5-phospho-D-ribosyl)imidazole-4-carboxamide + (6S)-5,6,7,8-tetrahydrofolate. The enzyme catalyses IMP + H2O = 5-formamido-1-(5-phospho-D-ribosyl)imidazole-4-carboxamide. It participates in purine metabolism; IMP biosynthesis via de novo pathway; 5-formamido-1-(5-phospho-D-ribosyl)imidazole-4-carboxamide from 5-amino-1-(5-phospho-D-ribosyl)imidazole-4-carboxamide (10-formyl THF route): step 1/1. Its pathway is purine metabolism; IMP biosynthesis via de novo pathway; IMP from 5-formamido-1-(5-phospho-D-ribosyl)imidazole-4-carboxamide: step 1/1. The polypeptide is Bifunctional purine biosynthesis protein PurH (Ruminiclostridium cellulolyticum (strain ATCC 35319 / DSM 5812 / JCM 6584 / H10) (Clostridium cellulolyticum)).